The following is a 695-amino-acid chain: MDPSELTEPQAMVELERLAQQIRALDRAYYEDDAPTVTDAEYDALRQRNLAIEARFPDLRRADSPSLHVSGAPSAAFGRHRHLVPMLSLDNVFGREDFESFVTRAARFLGLNDDQARALRFVAEPKIDGLSISLTYEHGRFVRGTTRGDGTEGEDVTANLRTLRDVPLRLKGPAPALIEIRGEVFLSKPAFLSINAAQAEAGQKPFANPRNAAAGSLRQLDPNITARRPLSLFAYAQGFSSDRVADTHWDYLERLRQWGFTVNPLSCVVESAEAAEAFMDRIARERSGLEYDIDGVVYKVDDLALQDRLGFVGRAPRWAIAWKFPAEQAITRLTRIDIQVGRTGALTPVAILEPVNVGGVIVTRATLHNEDEIARKDVRVGDLVQIQRAGDVIPQILGVVPPGADAPPRGEAFIFPHTCPICGARAERPPGEVVWRCTGGLTCPAQVVERLIHFVSRDAFDIDGLGERTITEFHADGLLKTPADIFRLPDHEADIATREGWGTVSARNLTASVRARQTIPLARFIYALGIRRIGTSNARLLARHYGSYTHWREQMLRATTIGSDERLALGSITGIGGAIADELAAFFMEAHNLETLDDLTAMLTAIEDEDLPAQGHLSGKTVVFTGTLTTMTRPEAKAIAERLGARVTDSVSKKTDLVVLGADAGSKARKAAELGIDTLDEEGWRELAGIGPVGP.

NAD(+) is bound by residues 39 to 43 (DAEYD), 88 to 89 (SL), and E124. Catalysis depends on K126, which acts as the N6-AMP-lysine intermediate. Residues R147, E183, K299, and K323 each contribute to the NAD(+) site. Zn(2+) is bound by residues C419, C422, C437, and C443. One can recognise a BRCT domain in the interval 612–695 (PAQGHLSGKT…ELAGIGPVGP (84 aa)).

Belongs to the NAD-dependent DNA ligase family. LigA subfamily. It depends on Mg(2+) as a cofactor. The cofactor is Mn(2+).

The catalysed reaction is NAD(+) + (deoxyribonucleotide)n-3'-hydroxyl + 5'-phospho-(deoxyribonucleotide)m = (deoxyribonucleotide)n+m + AMP + beta-nicotinamide D-nucleotide.. Functionally, DNA ligase that catalyzes the formation of phosphodiester linkages between 5'-phosphoryl and 3'-hydroxyl groups in double-stranded DNA using NAD as a coenzyme and as the energy source for the reaction. It is essential for DNA replication and repair of damaged DNA. The protein is DNA ligase of Gluconacetobacter diazotrophicus (strain ATCC 49037 / DSM 5601 / CCUG 37298 / CIP 103539 / LMG 7603 / PAl5).